The primary structure comprises 513 residues: Protein disulfide-isomerase 2 (513 aa).

The signal sequence occupies residues 1–20; sequence MNKFLALLFVLALFANIAFS. Thioredoxin domains follow at residues 21-147 and 355-486; these read CEGH…EELK and DVIG…DNAA. Active-site nucleophile residues include C70, C73, C406, and C409. 2 disulfide bridges follow: C70–C73 and C406–C409. Residues 491–513 form a disordered region; it reads LPSSQTDDNVESKKDSSAKHDEL. A compositionally biased stretch (basic and acidic residues) spans 500–513; it reads VESKKDSSAKHDEL. The short motif at 510 to 513 is the Prevents secretion from ER element; the sequence is HDEL.

Belongs to the protein disulfide isomerase family.

The protein localises to the endoplasmic reticulum lumen. The catalysed reaction is Catalyzes the rearrangement of -S-S- bonds in proteins.. Participates in the folding of proteins containing disulfide bonds, may be involved in glycosylation, prolyl hydroxylation and triglyceride transfer. The protein is Protein disulfide-isomerase 2 (pdi2) of Dictyostelium discoideum (Social amoeba).